Reading from the N-terminus, the 150-residue chain is MVKARRQAKILELVRTRVIETQEELAAALAAEGIPVTQATISRDIKELQLTKVPMPDGRYRYALPEEPGAAAGERWRRIFREAVLTIDHSGNLVVIKSLPGTAQGVAAAIDHAGWPEMIGTVAGDDTVIVVVKPADATGEVAERLKGLMR.

Belongs to the ArgR family.

The protein resides in the cytoplasm. It functions in the pathway amino-acid biosynthesis; L-arginine biosynthesis [regulation]. In terms of biological role, regulates arginine biosynthesis genes. The sequence is that of Arginine repressor from Symbiobacterium thermophilum (strain DSM 24528 / JCM 14929 / IAM 14863 / T).